Consider the following 504-residue polypeptide: Glycerol kinase (504 aa).

An ADP-binding site is contributed by Thr14. ATP-binding residues include Thr14, Thr15, and Ser16. Thr14 is a sn-glycerol 3-phosphate binding site. Position 18 (Arg18) interacts with ADP. Sn-glycerol 3-phosphate is bound by residues Arg84, Glu85, Tyr136, and Asp246. 5 residues coordinate glycerol: Arg84, Glu85, Tyr136, Asp246, and Gln247. ADP contacts are provided by Thr268 and Gly311. Residues Thr268, Gly311, Gln315, and Gly412 each coordinate ATP. ADP contacts are provided by Gly412 and Asn416.

Belongs to the FGGY kinase family.

It carries out the reaction glycerol + ATP = sn-glycerol 3-phosphate + ADP + H(+). Its pathway is polyol metabolism; glycerol degradation via glycerol kinase pathway; sn-glycerol 3-phosphate from glycerol: step 1/1. Inhibited by fructose 1,6-bisphosphate (FBP). Its function is as follows. Key enzyme in the regulation of glycerol uptake and metabolism. Catalyzes the phosphorylation of glycerol to yield sn-glycerol 3-phosphate. The protein is Glycerol kinase of Aliivibrio fischeri (strain MJ11) (Vibrio fischeri).